Consider the following 382-residue polypeptide: uncharacterized protein (382 aa).

12 consecutive transmembrane segments (helical) span residues 14 to 34 (GLLL…LWLA), 45 to 65 (VVSS…GYVI), 79 to 99 (FIFA…SWLA), 102 to 122 (FVAG…LMCS), 131 to 151 (LLAA…LLVS), 157 to 177 (LMSV…PLLF), 204 to 224 (LGVN…GLMP), 235 to 255 (ASIG…QWPI), 270 to 290 (VQVF…AMAP), 291 to 311 (ALFI…AWAC), 325 to 345 (ALLL…AMLM), and 348 to 368 (FSDN…LLML).

The protein belongs to the major facilitator superfamily. YcaD (TC 2.A.1.26) family.

The protein resides in the cell inner membrane. This is an uncharacterized protein from Escherichia coli O6:K15:H31 (strain 536 / UPEC).